We begin with the raw amino-acid sequence, 404 residues long: Probable oxalate decarboxylase ARB_04859 (404 aa).

Residues Met-1–Ala-17 form the signal peptide. The Cupin type-1 1 domain occupies Phe-74–Asp-215. Residues His-117, His-119, Glu-123, and His-162 each contribute to the Mn(2+) site. 2 N-linked (GlcNAc...) asparagine glycosylation sites follow: Asn-226 and Asn-244. The 145-residue stretch at Phe-249–Glu-393 folds into the Cupin type-1 2 domain. 4 residues coordinate Mn(2+): His-296, His-298, Glu-303, and His-342. N-linked (GlcNAc...) asparagine glycosylation occurs at Asn-346. The active-site Proton donor is the Glu-357.

The cofactor is Mn(2+).

The protein resides in the secreted. It catalyses the reaction oxalate + H(+) = formate + CO2. In terms of biological role, converts oxalate to formate and CO(2) in an O(2)-dependent reaction. Can also catalyze minor side reactions: oxalate oxidation to produce H(2)O(2), and oxalate-dependent, H(2)O(2)-independent dye oxidations. The protein is Probable oxalate decarboxylase ARB_04859 of Arthroderma benhamiae (strain ATCC MYA-4681 / CBS 112371) (Trichophyton mentagrophytes).